Here is a 141-residue protein sequence, read N- to C-terminus: Hemoglobin subunit alpha-A (141 aa).

The 141-residue stretch at 1–141 (VLSASDKANV…VGTVLTAKYR (141 aa)) folds into the Globin domain. His58 contributes to the O2 binding site. His87 contacts heme b.

The protein belongs to the globin family. Heterotetramer of two alpha chains and two beta chains. In terms of tissue distribution, red blood cells.

In terms of biological role, involved in oxygen transport from the lung to the various peripheral tissues. This chain is Hemoglobin subunit alpha-A (HBAA), found in Sturnus vulgaris (Starling).